Consider the following 524-residue polypeptide: N-acetylgalactosamine-6-sulfatase (524 aa).

A signal peptide spans 1–27 (MTACSTAIRAQQLLLPVLSALGLLAAG). Residues 28-381 (APQPPNIVLL…PTMLQGHIID (354 aa)) form a catalytic domain region. Positions 40, 41, and 80 each coordinate Ca(2+). C80 functions as the Nucleophile in the catalytic mechanism. Position 80 is a 3-oxoalanine (Cys) (C80). H143 is an active-site residue. N-linked (GlcNAc...) asparagine glycosylation occurs at N205. Residues D290 and N291 each contribute to the Ca(2+) site. A disulfide bridge links C310 with C421. N-linked (GlcNAc...) asparagine glycosylation is present at N425. 2 disulfide bridges follow: C491–C520 and C503–C509.

Belongs to the sulfatase family. As to quaternary structure, homodimer. Ca(2+) is required as a cofactor. The conversion to 3-oxoalanine (also known as C-formylglycine, FGly), of a serine or cysteine residue in prokaryotes and of a cysteine residue in eukaryotes, is critical for catalytic activity.

Its subcellular location is the lysosome. The catalysed reaction is Hydrolysis of the 6-sulfate groups of the N-acetyl-D-galactosamine 6-sulfate units of chondroitin sulfate and of the D-galactose 6-sulfate units of keratan sulfate.. In Rattus norvegicus (Rat), this protein is N-acetylgalactosamine-6-sulfatase (Galns).